The primary structure comprises 150 residues: 3-hydroxyacyl-[acyl-carrier-protein] dehydratase FabZ (150 aa).

The active site involves H52.

The protein belongs to the thioester dehydratase family. FabZ subfamily.

The protein localises to the cytoplasm. It catalyses the reaction a (3R)-hydroxyacyl-[ACP] = a (2E)-enoyl-[ACP] + H2O. Functionally, involved in unsaturated fatty acids biosynthesis. Catalyzes the dehydration of short chain beta-hydroxyacyl-ACPs and long chain saturated and unsaturated beta-hydroxyacyl-ACPs. This Variovorax paradoxus (strain S110) protein is 3-hydroxyacyl-[acyl-carrier-protein] dehydratase FabZ.